A 179-amino-acid chain; its full sequence is ATP synthase subunit delta (179 aa).

Belongs to the ATPase delta chain family. F-type ATPases have 2 components, F(1) - the catalytic core - and F(0) - the membrane proton channel. F(1) has five subunits: alpha(3), beta(3), gamma(1), delta(1), epsilon(1). F(0) has three main subunits: a(1), b(2) and c(10-14). The alpha and beta chains form an alternating ring which encloses part of the gamma chain. F(1) is attached to F(0) by a central stalk formed by the gamma and epsilon chains, while a peripheral stalk is formed by the delta and b chains.

The protein localises to the cell inner membrane. Its function is as follows. F(1)F(0) ATP synthase produces ATP from ADP in the presence of a proton or sodium gradient. F-type ATPases consist of two structural domains, F(1) containing the extramembraneous catalytic core and F(0) containing the membrane proton channel, linked together by a central stalk and a peripheral stalk. During catalysis, ATP synthesis in the catalytic domain of F(1) is coupled via a rotary mechanism of the central stalk subunits to proton translocation. This protein is part of the stalk that links CF(0) to CF(1). It either transmits conformational changes from CF(0) to CF(1) or is implicated in proton conduction. In Paraburkholderia xenovorans (strain LB400), this protein is ATP synthase subunit delta.